A 198-amino-acid chain; its full sequence is Angiopoietin-like protein 8 (198 aa).

The signal sequence occupies residues 1–15; sequence MAVLALCLLWTLASA.

Belongs to the ANGPTL8 family. As to quaternary structure, interacts with ANGPTL3. Post-translationally, proteolytically cleaved at the N-terminus. In terms of tissue distribution, expressed in liver and fat. Enriched in white and brown adipose tissues.

The protein resides in the secreted. Hormone that acts as a blood lipid regulator by regulating serum triglyceride levels. May be involved in the metabolic transition between fasting and refeeding: required to direct fatty acids to adipose tissue for storage in the fed state. According to a report, may act by promoting ANGPTL3 cleavage. According to another study, not required for cleavage of ANGPTL3. The chain is Angiopoietin-like protein 8 from Mus musculus (Mouse).